The sequence spans 75 residues: Protein Tlp homolog (75 aa).

Residues K48–M75 form a disordered region.

It belongs to the Tlp family.

This Clostridium botulinum (strain 657 / Type Ba4) protein is Protein Tlp homolog.